A 990-amino-acid chain; its full sequence is Nucleotide-binding leucine-rich repeat (NLR)-like protein (990 aa).

The tract at residues Gly22–Leu304 is purine nucleoside phosphorylase domain. An NB-ARC domain is found at Arg334–Glu563. 6 TPR repeats span residues Arg732–Ala765, Ile774–Val807, Leu816–Ala849, Leu858–Thr891, Leu900–Val933, and Leu942–Asp975. The disordered stretch occupies residues Gln965 to Lys990. Residues Lys981–Lys990 are compositionally biased toward basic residues.

It carries out the reaction ATP + H2O = D-ribose 5-triphosphate + adenine. It catalyses the reaction dATP + H2O = 2-deoxyribose 5-triphosphate + adenine. Its function is as follows. The N-terminal purine nucleoside phosphorylase (PNP) domain cleaves the N-glycosidic bond of ATP, and to a lesser extent dATP; has very weak activity on adenosine and deoxyadenosine and no activity on (d)ADP or (d)AMP. This Hyaloscypha variabilis (strain UAMH 11265 / GT02V1 / F) (Meliniomyces variabilis) protein is Nucleotide-binding leucine-rich repeat (NLR)-like protein.